The chain runs to 186 residues: Probable calcium-binding protein CML25 (186 aa).

The segment covering 1–17 (MFNKNQGSNGGSSSNVG) has biased composition (low complexity). The disordered stretch occupies residues 1 to 23 (MFNKNQGSNGGSSSNVGIGADSP). 4 EF-hand domains span residues 33 to 68 (TEIRELEAVFKKFDVNGDGKISSKELGAIMTSLGHE), 69 to 104 (VPEEELEKAITEIDRKGDGYINFEEFVELNTKGMDQ), 106 to 141 (DVLENLKDAFSVYDIDGNGSISAEELHEVLRSLGDE), and 142 to 177 (CSIAECRKMIGGVDKDGDGTIDFEEFKIMMTMGSRR). Positions 46, 48, 50, 52, and 57 each coordinate Ca(2+). Ca(2+) contacts are provided by aspartate 119, aspartate 121, asparagine 123, serine 125, glutamate 130, aspartate 155, aspartate 157, aspartate 159, threonine 161, and glutamate 166.

Potential calcium sensor. In Arabidopsis thaliana (Mouse-ear cress), this protein is Probable calcium-binding protein CML25 (CML25).